Consider the following 622-residue polypeptide: Golgin subfamily A member 6-like protein 7 (622 aa).

3 disordered regions span residues 1-82, 251-496, and 511-580; these read MMSE…QQAL, RKHE…RKQV, and EKMQ…HDNR. Composition is skewed to basic and acidic residues over residues 57–74, 251–275, 283–332, 339–367, 374–388, and 395–420; these read SPED…ENKA, RKHE…REQE, and EQMR…KQEE. Residues 100 to 534 are a coiled coil; it reads KTELETALHD…EKRREKKERM (435 aa). The segment covering 477-489 has biased composition (acidic residues); sequence QMGEQEEQMGEQE. 2 stretches are compositionally biased toward basic and acidic residues: residues 511 to 546 and 567 to 580; these read EKMQ…ERCS and PARE…HDNR.

It belongs to the GOLGA6 family.

The chain is Golgin subfamily A member 6-like protein 7 from Homo sapiens (Human).